The chain runs to 249 residues: Proteasome subunit alpha (249 aa).

It belongs to the peptidase T1A family. In terms of assembly, the 20S proteasome core is composed of 14 alpha and 14 beta subunits that assemble into four stacked heptameric rings, resulting in a barrel-shaped structure. The two inner rings, each composed of seven catalytic beta subunits, are sandwiched by two outer rings, each composed of seven alpha subunits. The catalytic chamber with the active sites is on the inside of the barrel. Has a gated structure, the ends of the cylinder being occluded by the N-termini of the alpha-subunits. Is capped at one or both ends by the proteasome regulatory ATPase, PAN.

It localises to the cytoplasm. Its activity is regulated as follows. The formation of the proteasomal ATPase PAN-20S proteasome complex, via the docking of the C-termini of PAN into the intersubunit pockets in the alpha-rings, triggers opening of the gate for substrate entry. Interconversion between the open-gate and close-gate conformations leads to a dynamic regulation of the 20S proteasome proteolysis activity. Its function is as follows. Component of the proteasome core, a large protease complex with broad specificity involved in protein degradation. This is Proteasome subunit alpha from Methanosarcina barkeri (strain Fusaro / DSM 804).